The chain runs to 415 residues: Gamma-glutamyl phosphate reductase (415 aa).

Belongs to the gamma-glutamyl phosphate reductase family.

It is found in the cytoplasm. The enzyme catalyses L-glutamate 5-semialdehyde + phosphate + NADP(+) = L-glutamyl 5-phosphate + NADPH + H(+). The protein operates within amino-acid biosynthesis; L-proline biosynthesis; L-glutamate 5-semialdehyde from L-glutamate: step 2/2. In terms of biological role, catalyzes the NADPH-dependent reduction of L-glutamate 5-phosphate into L-glutamate 5-semialdehyde and phosphate. The product spontaneously undergoes cyclization to form 1-pyrroline-5-carboxylate. This Thermotoga sp. (strain RQ2) protein is Gamma-glutamyl phosphate reductase.